The chain runs to 110 residues: Iron-sulfur cluster assembly protein CyaY (110 aa).

Belongs to the frataxin family.

Its function is as follows. Involved in iron-sulfur (Fe-S) cluster assembly. May act as a regulator of Fe-S biogenesis. The polypeptide is Iron-sulfur cluster assembly protein CyaY (Stutzerimonas stutzeri (strain A1501) (Pseudomonas stutzeri)).